Reading from the N-terminus, the 206-residue chain is Small ribosomal subunit protein uS4 (206 aa).

Positions 96 to 156 (GRLDNVVYRM…EKSKNQLRIQ (61 aa)) constitute an S4 RNA-binding domain.

The protein belongs to the universal ribosomal protein uS4 family. In terms of assembly, part of the 30S ribosomal subunit. Contacts protein S5. The interaction surface between S4 and S5 is involved in control of translational fidelity.

In terms of biological role, one of the primary rRNA binding proteins, it binds directly to 16S rRNA where it nucleates assembly of the body of the 30S subunit. Its function is as follows. With S5 and S12 plays an important role in translational accuracy. This Saccharophagus degradans (strain 2-40 / ATCC 43961 / DSM 17024) protein is Small ribosomal subunit protein uS4.